Consider the following 245-residue polypeptide: Ribonuclease PH (245 aa).

Residues R86 and 124 to 126 (GTR) contribute to the phosphate site.

The protein belongs to the RNase PH family. In terms of assembly, homohexameric ring arranged as a trimer of dimers.

The catalysed reaction is tRNA(n+1) + phosphate = tRNA(n) + a ribonucleoside 5'-diphosphate. In terms of biological role, phosphorolytic 3'-5' exoribonuclease that plays an important role in tRNA 3'-end maturation. Removes nucleotide residues following the 3'-CCA terminus of tRNAs; can also add nucleotides to the ends of RNA molecules by using nucleoside diphosphates as substrates, but this may not be physiologically important. Probably plays a role in initiation of 16S rRNA degradation (leading to ribosome degradation) during starvation. The protein is Ribonuclease PH of Bacillus mycoides (strain KBAB4) (Bacillus weihenstephanensis).